Consider the following 81-residue polypeptide: Sulfur carrier protein TusA (81 aa).

The active-site Cysteine persulfide intermediate is Cys19.

The protein belongs to the sulfur carrier protein TusA family. Interacts with IscS.

It localises to the cytoplasm. It functions in the pathway tRNA modification. Functionally, sulfur carrier protein involved in sulfur trafficking in the cell. Part of a sulfur-relay system required for 2-thiolation during synthesis of 2-thiouridine of the modified wobble base 5-methylaminomethyl-2-thiouridine (mnm(5)s(2)U) in tRNA. Interacts with IscS and stimulates its cysteine desulfurase activity. Accepts an activated sulfur from IscS, which is then transferred to TusD, and thus determines the direction of sulfur flow from IscS to 2-thiouridine formation. Also appears to be involved in sulfur transfer for the biosynthesis of molybdopterin. The protein is Sulfur carrier protein TusA of Escherichia fergusonii (strain ATCC 35469 / DSM 13698 / CCUG 18766 / IAM 14443 / JCM 21226 / LMG 7866 / NBRC 102419 / NCTC 12128 / CDC 0568-73).